A 673-amino-acid chain; its full sequence is Glycine--tRNA ligase beta subunit (673 aa).

It belongs to the class-II aminoacyl-tRNA synthetase family. Tetramer of two alpha and two beta subunits.

The protein resides in the cytoplasm. It catalyses the reaction tRNA(Gly) + glycine + ATP = glycyl-tRNA(Gly) + AMP + diphosphate. This is Glycine--tRNA ligase beta subunit from Lactococcus lactis subsp. cremoris (strain SK11).